The chain runs to 269 residues: Ribonuclease HII (269 aa).

An RNase H type-2 domain is found at 28–222; the sequence is RHVAGADEAG…VSGRRGAPPR (195 aa). 3 residues coordinate a divalent metal cation: aspartate 34, glutamate 35, and aspartate 128.

Belongs to the RNase HII family. It depends on Mn(2+) as a cofactor. The cofactor is Mg(2+).

It is found in the cytoplasm. It catalyses the reaction Endonucleolytic cleavage to 5'-phosphomonoester.. Functionally, endonuclease that specifically degrades the RNA of RNA-DNA hybrids. The sequence is that of Ribonuclease HII from Salinispora arenicola (strain CNS-205).